The chain runs to 255 residues: Diphthine synthase (255 aa).

Residues leucine 9, aspartate 85, valine 88, serine 113 to isoleucine 114, leucine 164, alanine 207, and histidine 232 each bind S-adenosyl-L-methionine.

The protein belongs to the diphthine synthase family. Homodimer.

It catalyses the reaction 2-[(3S)-amino-3-carboxypropyl]-L-histidyl-[translation elongation factor 2] + 3 S-adenosyl-L-methionine = diphthine-[translation elongation factor 2] + 3 S-adenosyl-L-homocysteine + 3 H(+). The protein operates within protein modification; peptidyl-diphthamide biosynthesis. Its function is as follows. S-adenosyl-L-methionine-dependent methyltransferase that catalyzes the trimethylation of the amino group of the modified target histidine residue in translation elongation factor 2 (EF-2), to form an intermediate called diphthine. The three successive methylation reactions represent the second step of diphthamide biosynthesis. This is Diphthine synthase from Methanococcus maripaludis (strain C5 / ATCC BAA-1333).